Consider the following 429-residue polypeptide: Chaperone SurA (429 aa).

A signal peptide spans 1–18 (MFKRIALVCALFSGVCFA). PpiC domains lie at 170 to 271 (NLTY…KLVA) and 281 to 380 (ITQT…EVIA).

It localises to the periplasm. The catalysed reaction is [protein]-peptidylproline (omega=180) = [protein]-peptidylproline (omega=0). In terms of biological role, chaperone involved in the correct folding and assembly of outer membrane proteins. Recognizes specific patterns of aromatic residues and the orientation of their side chains, which are found more frequently in integral outer membrane proteins. May act in both early periplasmic and late outer membrane-associated steps of protein maturation. This chain is Chaperone SurA, found in Legionella pneumophila subsp. pneumophila (strain Philadelphia 1 / ATCC 33152 / DSM 7513).